A 153-amino-acid polypeptide reads, in one-letter code: Proline-rich membrane anchor 1 (153 aa).

The N-terminal stretch at 1 to 35 (MLLRDLVLRRGCCWSSLLLHCALHPLWGFVQVTHG) is a signal peptide. At 36–92 (EPQKSCSKVTDSCRHVCQCRPPPPLPPPPPPPPPPRLLSAPAPNSTSCPTEESWWSG) the chain is on the extracellular side. In terms of domain architecture, PRAD spans 56 to 70 (PPPPLPPPPPPPPPP). A compositionally biased stretch (pro residues) spans 59–71 (PLPPPPPPPPPPR). The disordered stretch occupies residues 59–79 (PLPPPPPPPPPPRLLSAPAPN). Asn-79 is a glycosylation site (N-linked (GlcNAc...) asparagine). A helical membrane pass occupies residues 93 to 113 (LVIIIAVCCASLVFLTVLVII). Topologically, residues 114–153 (CYKAIKRKPLRKDENGTSVAEYPMSASQSNKGVDVNNAVV) are cytoplasmic.

In terms of assembly, interacts with ACHE, probably through disulfide bonds.

The protein localises to the cell membrane. It is found in the cell junction. The protein resides in the synapse. In terms of biological role, required to anchor acetylcholinesterase (ACHE) to the basal lamina of the neuromuscular junction and to the membrane of neuronal synapses in brain. Also able to organize ACHE into tetramers. In Homo sapiens (Human), this protein is Proline-rich membrane anchor 1 (PRIMA1).